The primary structure comprises 261 residues: Glutamate 5-kinase (261 aa).

Position 7 (Lys-7) interacts with ATP. 3 residues coordinate substrate: Ser-46, Asp-131, and Asn-147. ATP is bound by residues 167-168 (SD) and 209-215 (TGGIVTK).

The protein belongs to the glutamate 5-kinase family.

It is found in the cytoplasm. It catalyses the reaction L-glutamate + ATP = L-glutamyl 5-phosphate + ADP. It functions in the pathway amino-acid biosynthesis; L-proline biosynthesis; L-glutamate 5-semialdehyde from L-glutamate: step 1/2. Functionally, catalyzes the transfer of a phosphate group to glutamate to form L-glutamate 5-phosphate. The polypeptide is Glutamate 5-kinase (Wolinella succinogenes (strain ATCC 29543 / DSM 1740 / CCUG 13145 / JCM 31913 / LMG 7466 / NCTC 11488 / FDC 602W) (Vibrio succinogenes)).